A 451-amino-acid polypeptide reads, in one-letter code: GTPase Der (451 aa).

2 EngA-type G domains span residues 5 to 170 and 186 to 359; these read PVVA…VEPE and IKLA…AAAF. GTP contacts are provided by residues 11–18, 58–62, 122–125, 192–199, 239–243, and 304–307; these read GRPNVGKS, DTGGF, NKAE, DTAGL, and NKWD. The KH-like domain occupies 360–444; the sequence is AKLSTPKLTR…PLRIEFKSSR (85 aa).

Belongs to the TRAFAC class TrmE-Era-EngA-EngB-Septin-like GTPase superfamily. EngA (Der) GTPase family. As to quaternary structure, associates with the 50S ribosomal subunit.

GTPase that plays an essential role in the late steps of ribosome biogenesis. The polypeptide is GTPase Der (Bordetella petrii (strain ATCC BAA-461 / DSM 12804 / CCUG 43448)).